We begin with the raw amino-acid sequence, 615 residues long: MPIQVLPPQLANQIAAGEVVERPASVVKELVENSLDAGATRIDIDIERGGAKLIRIRDNGCGIKKDELALALARHATSKIASLDDLEAIISLGFRGEALASISSVSRLTLTSRTAEQQEAWQAYAEGRDMDVTVKPAAHPVGTTLEVLDLFYNTPARRKFLRTEKTEFNHIDEIIRRIALARFDVTISLSHNGKIVRQYRAVPEGGQKERRLGAICGTAFLEQALAIEWQHGDLTLRGWVADPNHTTPALAEIQYCYVNGRMMRDRLINHAIRQACEDKLGADQQPAFVLYLEIDPHQVDVNVHPAKHEVRFHQSRLVHDFIYQGVLSVLQQQLETPLPLDDEPQPAPRAIPENRVAAGRNHFAEPAVREPVAPRYSPAPASGSRPAASWPNAQPGYQKQQGEVYRQLLQTPAPMQKPKAPEPQEPALAANSQSFGRVLTIVHSDCALLERDGNISLLSLPVAERWLRQAQLTPGEVPVCAQPLLIPLRLKVSGEEKSALEKAQSALAELGIDFQSDAQHVTIRAVPLPLRQQNLQILIPELIGYLAKQSVFEPGNIAQWIARNLMSEHAQWSMAQAITLLADVERLCPQLVKTPPGGLLQSVDLHPAIKALKDE.

A disordered region spans residues histidine 362–tyrosine 397. Low complexity predominate over residues alanine 373–proline 391.

It belongs to the DNA mismatch repair MutL/HexB family.

Functionally, this protein is involved in the repair of mismatches in DNA. It is required for dam-dependent methyl-directed DNA mismatch repair. May act as a 'molecular matchmaker', a protein that promotes the formation of a stable complex between two or more DNA-binding proteins in an ATP-dependent manner without itself being part of a final effector complex. The sequence is that of DNA mismatch repair protein MutL from Escherichia coli O45:K1 (strain S88 / ExPEC).